Here is a 237-residue protein sequence, read N- to C-terminus: Ubiquinone biosynthesis O-methyltransferase (237 aa).

4 residues coordinate S-adenosyl-L-methionine: R39, G59, D80, and M124.

The protein belongs to the methyltransferase superfamily. UbiG/COQ3 family.

It catalyses the reaction a 3-demethylubiquinol + S-adenosyl-L-methionine = a ubiquinol + S-adenosyl-L-homocysteine + H(+). The enzyme catalyses a 3-(all-trans-polyprenyl)benzene-1,2-diol + S-adenosyl-L-methionine = a 2-methoxy-6-(all-trans-polyprenyl)phenol + S-adenosyl-L-homocysteine + H(+). It participates in cofactor biosynthesis; ubiquinone biosynthesis. In terms of biological role, O-methyltransferase that catalyzes the 2 O-methylation steps in the ubiquinone biosynthetic pathway. This Vibrio atlanticus (strain LGP32) (Vibrio splendidus (strain Mel32)) protein is Ubiquinone biosynthesis O-methyltransferase.